The following is a 160-amino-acid chain: SsrA-binding protein (160 aa).

It belongs to the SmpB family.

It is found in the cytoplasm. Its function is as follows. Required for rescue of stalled ribosomes mediated by trans-translation. Binds to transfer-messenger RNA (tmRNA), required for stable association of tmRNA with ribosomes. tmRNA and SmpB together mimic tRNA shape, replacing the anticodon stem-loop with SmpB. tmRNA is encoded by the ssrA gene; the 2 termini fold to resemble tRNA(Ala) and it encodes a 'tag peptide', a short internal open reading frame. During trans-translation Ala-aminoacylated tmRNA acts like a tRNA, entering the A-site of stalled ribosomes, displacing the stalled mRNA. The ribosome then switches to translate the ORF on the tmRNA; the nascent peptide is terminated with the 'tag peptide' encoded by the tmRNA and targeted for degradation. The ribosome is freed to recommence translation, which seems to be the essential function of trans-translation. This Sodalis glossinidius (strain morsitans) protein is SsrA-binding protein.